The sequence spans 517 residues: Cell division cycle protein 73 (517 aa).

Residues 124-135 show a composition bias toward basic and acidic residues; that stretch reads SEPEAKKPRLDG. Disordered regions lie at residues 124–159 and 306–326; these read SEPEAKKPRLDGEAAGEPMDTSTSDEPQESAVSAAK and GHHAVQKAPDAPPGRPPLAKP. Pro residues predominate over residues 315–324; the sequence is DAPPGRPPLA.

The protein belongs to the CDC73 family. Component of the PAF1 complex which consists of at least cdc-73, ctr-9, leo-1, pafo-1 and rtfo-1.

It localises to the nucleus. Its function is as follows. Component of the PAF1 complex which is a multifunctional complex involved in transcription initiation via genetic interactions with TATA-binding proteins, elongation and transcription-coupled histone modification. In Caenorhabditis elegans, this protein is Cell division cycle protein 73.